The chain runs to 258 residues: Phosphate import ATP-binding protein PstB (258 aa).

Positions 13–253 constitute an ABC transporter domain; the sequence is IKIENLNLWY…PREKSTEDYI (241 aa). 45–52 serves as a coordination point for ATP; it reads GPSGCGKS.

This sequence belongs to the ABC transporter superfamily. Phosphate importer (TC 3.A.1.7) family. The complex is composed of two ATP-binding proteins (PstB), two transmembrane proteins (PstC and PstA) and a solute-binding protein (PstS).

It is found in the cell membrane. It catalyses the reaction phosphate(out) + ATP + H2O = ADP + 2 phosphate(in) + H(+). Its function is as follows. Part of the ABC transporter complex PstSACB involved in phosphate import. Responsible for energy coupling to the transport system. The sequence is that of Phosphate import ATP-binding protein PstB from Methanosarcina barkeri (strain Fusaro / DSM 804).